Here is a 335-residue protein sequence, read N- to C-terminus: Eukaryotic translation initiation factor 3 subunit H (335 aa).

The region spanning 22–156 (VQIDGMVVLK…LKAYRLTPKL (135 aa)) is the MPN domain. Positions 254–263 (QQQKHQYTQR) are enriched in low complexity. The disordered stretch occupies residues 254-287 (QQQKHQYTQRRQQENLQRQSRGETSLPEEDVNKL). The span at 267–276 (ENLQRQSRGE) shows a compositional bias: polar residues.

The protein belongs to the eIF-3 subunit H family. Component of the eukaryotic translation initiation factor 3 (eIF-3) complex, which is composed of 13 subunits: eif3a, eif3b, eif3c, eif3d, eif3e, eif3f, eif3g, eif3h, eif3i, eif3j, eif3k, eif3l and eif3m.

Its subcellular location is the cytoplasm. In terms of biological role, component of the eukaryotic translation initiation factor 3 (eIF-3) complex, which is involved in protein synthesis of a specialized repertoire of mRNAs and, together with other initiation factors, stimulates binding of mRNA and methionyl-tRNAi to the 40S ribosome. The eIF-3 complex specifically targets and initiates translation of a subset of mRNAs involved in cell proliferation. The protein is Eukaryotic translation initiation factor 3 subunit H (eif3h) of Xenopus tropicalis (Western clawed frog).